The chain runs to 429 residues: Ribosomal RNA small subunit methyltransferase B (429 aa).

S-adenosyl-L-methionine is bound by residues 254-260 (CAAPGGK), Asp277, Asp303, and Asp322. The active-site Nucleophile is Cys375.

The protein belongs to the class I-like SAM-binding methyltransferase superfamily. RsmB/NOP family.

The protein resides in the cytoplasm. The enzyme catalyses cytidine(967) in 16S rRNA + S-adenosyl-L-methionine = 5-methylcytidine(967) in 16S rRNA + S-adenosyl-L-homocysteine + H(+). Functionally, specifically methylates the cytosine at position 967 (m5C967) of 16S rRNA. The chain is Ribosomal RNA small subunit methyltransferase B from Salmonella arizonae (strain ATCC BAA-731 / CDC346-86 / RSK2980).